A 268-amino-acid polypeptide reads, in one-letter code: Tryptophan synthase alpha chain (268 aa).

Catalysis depends on proton acceptor residues Glu-49 and Asp-60.

This sequence belongs to the TrpA family. In terms of assembly, tetramer of two alpha and two beta chains.

The catalysed reaction is (1S,2R)-1-C-(indol-3-yl)glycerol 3-phosphate + L-serine = D-glyceraldehyde 3-phosphate + L-tryptophan + H2O. The protein operates within amino-acid biosynthesis; L-tryptophan biosynthesis; L-tryptophan from chorismate: step 5/5. The alpha subunit is responsible for the aldol cleavage of indoleglycerol phosphate to indole and glyceraldehyde 3-phosphate. In Escherichia coli O6:K15:H31 (strain 536 / UPEC), this protein is Tryptophan synthase alpha chain.